The sequence spans 538 residues: RNA-binding protein RO60 (538 aa).

Met1 is modified (N-acetylmethionine). Ser4 and Ser19 each carry phosphoserine. One can recognise a TROVE domain in the interval 16-369 (IANSQDGYVW…TFKTVEPTGK (354 aa)). An RNA-binding region spans residues 120–284 (RIPTHLFTFI…EMPLTALLRN (165 aa)). N6-acetyllysine is present on residues Lys224 and Lys359. Residues 361–538 (FKTVEPTGKR…VIRNFTLDMI (178 aa)) form a VWFA-like domain region. Residues Ser378, Ser380, and Thr445 each coordinate a divalent metal cation.

This sequence belongs to the Ro 60 kDa family. Identified in a IGF2BP1-dependent mRNP granule complex containing untranslated mRNAs. Found in a complex with PUF60 and Y5 RNA. Interacts with RAB11FIP5.

It is found in the cytoplasm. Its function is as follows. RNA-binding protein that binds to misfolded non-coding RNAs, pre-5S rRNA, and several small cytoplasmic RNA molecules known as Y RNAs. Binds to endogenous Alu retroelements which are induced by type I interferon and stimulate porinflammatory cytokine secretion. Regulates the expression of Alu retroelements as well as inflammatory genes. May play roles in cilia formation and/or maintenance. The polypeptide is RNA-binding protein RO60 (Homo sapiens (Human)).